Here is a 219-residue protein sequence, read N- to C-terminus: Abasic site processing protein YobE (219 aa).

Cysteine 2 serves as the catalytic Nucleophile. Cysteine 2 carries the post-translational modification Thiazolidine linkage to a ring-opened DNA abasic site. Glutamate 106 is a catalytic residue.

This sequence belongs to the SOS response-associated peptidase family.

With respect to regulation, formation and reversal of DNA-protein cross-link depends on DNA context. Catalyzes formation of the thiazolidine linkage in presence of abasic sites in single-stranded DNA. Mediates the reversal of the thiazolidine cross-link in presence of double stranded DNA. Sensor of abasic sites in single-stranded DNA (ssDNA) required to preserve genome integrity by promoting error-free repair of abasic sites. Recognizes and binds abasic sites in ssDNA at replication forks and chemically modifies the lesion by forming a covalent cross-link with DNA: forms a stable thiazolidine linkage between a ring-opened abasic site and the alpha-amino and sulfhydryl substituents of its N-terminal catalytic cysteine residue. The DNA-protein cross-link is then reversed: able to catalyze the reversal of the thiazolidine cross-link and cycle between a cross-link and a non-cross-linked state depending on DNA context: mediates self-reversal of the thiazolidine cross-link in double stranded DNA. May act as a protease: mediates autocatalytic processing of its N-terminal methionine in order to expose the catalytic cysteine. This is Abasic site processing protein YobE (yobE) from Bacillus subtilis (strain 168).